The following is a 394-amino-acid chain: Probable 6-phosphogluconolactonase ARB_02015 (394 aa).

The signal sequence occupies residues 1–21; the sequence is MKTVPFLSLLQAGILTSGIVA. N-linked (GlcNAc...) asparagine glycosylation occurs at Asn51.

Belongs to the cycloisomerase 2 family.

It is found in the secreted. The catalysed reaction is 6-phospho-D-glucono-1,5-lactone + H2O = 6-phospho-D-gluconate + H(+). It functions in the pathway carbohydrate degradation; pentose phosphate pathway; D-ribulose 5-phosphate from D-glucose 6-phosphate (oxidative stage): step 2/3. In terms of biological role, catalyzes the hydrolysis of 6-phosphogluconolactone to 6-phosphogluconate. This chain is Probable 6-phosphogluconolactonase ARB_02015, found in Arthroderma benhamiae (strain ATCC MYA-4681 / CBS 112371) (Trichophyton mentagrophytes).